Consider the following 698-residue polypeptide: Protein let-99 (698 aa).

Positions 23–107 (FRSNLSLKTN…SESRIYLFMK (85 aa)) constitute a DEP domain. Disordered regions lie at residues 115 to 188 (PKPR…DDEI) and 653 to 672 (ITRSRNDWQPPVPDKPQASP). Residues 146–157 (RPPKARLPRRLS) are compositionally biased toward basic residues. Residues 178–188 (HGFDDHKDDEI) are compositionally biased toward basic and acidic residues.

Its subcellular location is the cytoplasm. It is found in the cell cortex. In terms of biological role, required for the proper orientation of spindles after the establishment of polarity. May play a role in interactions between the astral microtubules and the cortical cytoskeleton. Required for asymmetric forces on nuclei and spindles. Acts downstream of the PAR signaling as an intermediate that transduces polarity information to the machinery that positions the mitotic spindle, possibly by regulating force generation. Regulates gpr-1/2 asymmetric cortical localization during the first embryonic cell divisions. Acts antagonistically to the gpr-1/2 signaling pathway. Regulates mes-1 expression and/or localization pattern during early embryogenesis. This chain is Protein let-99 (let-99), found in Caenorhabditis elegans.